Consider the following 320-residue polypeptide: Tyrosine phosphatase H3 (320 aa).

In terms of domain architecture, Tyrosine-protein phosphatase spans 22–309 (NFWEFVRLEH…AFCYKAVRYA (288 aa)). Residue cysteine 250 is the Phosphocysteine intermediate of the active site.

This sequence belongs to the protein-tyrosine phosphatase family.

It catalyses the reaction O-phospho-L-tyrosyl-[protein] + H2O = L-tyrosyl-[protein] + phosphate. In terms of biological role, suppresses host immune cell adhesion and phagocytosis. The polypeptide is Tyrosine phosphatase H3 (H3) (Microplitis demolitor (Parasitoid wasp)).